The sequence spans 65 residues: Ringhalexin (65 aa).

Intrachain disulfides connect Cys3–Cys24, Cys17–Cys42, Cys46–Cys57, and Cys58–Cys63.

Expressed by the venom gland.

It is found in the secreted. Functionally, has anticoagulant activity, since it is able to inhibit the activation of coagulation factor X (F10) by coagulation factor VIIa (F7) (IC(50)=123.8 nM). Also shows weak irreversible neurotoxicity. The sequence is that of Ringhalexin from Hemachatus haemachatus (Rinkhals).